The chain runs to 451 residues: Proton-coupled amino acid transporter-like protein acs (451 aa).

Residues 1-48 lie on the Cytoplasmic side of the membrane; sequence MNDDIKTVTVYPTTLELTTPTKSANGSNDDYDPHQHRELKNPTTNFQT. The helical transmembrane segment at 49-69 threads the bilayer; that stretch reads FAHFLKASVGTGVLAMPSAFA. At 70–80 the chain is on the extracellular side; it reads HAGYVNGTLLT. N-linked (GlcNAc...) asparagine glycosylation is present at N75. Residues 81–101 form a helical membrane-spanning segment; the sequence is LIIGSLALYCLHILIKCMYIL. At 102 to 136 the chain is on the cytoplasmic side; that stretch reads CKRQRVPYVSFSQAMNLGLKQGPPWLRCLAPIAVP. The chain crosses the membrane as a helical span at residues 137-157; that stretch reads FVDGFLAFYHFGICCVYVVFI. The Extracellular segment spans residues 158 to 167; it reads AESIKQLVDE. A helical membrane pass occupies residues 168 to 188; the sequence is YLVVWDVRIHMCIIIVPLLLI. At 189 to 199 the chain is on the cytoplasmic side; it reads YSIKNLKLLAP. The helical transmembrane segment at 200–220 threads the bilayer; sequence FSSAANLLLLVGFGIILYYIF. Residues 221 to 237 are Extracellular-facing; the sequence is EELPPLSERDPFVAAGK. A helical membrane pass occupies residues 238–258; it reads LPTFFGTVLFALEAVGVILAI. Residues 259 to 272 lie on the Cytoplasmic side of the membrane; that stretch reads EENMATPKSFVGPC. The chain crosses the membrane as a helical span at residues 273 to 293; the sequence is GILNSGMSIVLGLYVLLGFFG. The Extracellular portion of the chain corresponds to 294–320; it reads YWKYGNESEGSITLNIPQSEIPAQVVK. A glycan (N-linked (GlcNAc...) asparagine) is linked at N299. The chain crosses the membrane as a helical span at residues 321 to 341; the sequence is VFFAITTWISYALQGYVTAHI. The Cytoplasmic segment spans residues 342–357; sequence LWDKYLAKRFKETRQT. The helical transmembrane segment at 358–378 threads the bilayer; sequence FYELIFRAIIVLLTFGCAVAI. The Extracellular portion of the chain corresponds to 379 to 382; that stretch reads PDLS. Residues 383–403 form a helical membrane-spanning segment; sequence VFLSLVGSFCLSILGLIFPVL. The Cytoplasmic segment spans residues 404–420; the sequence is LQICVQYTEGYGPFRIK. The helical transmembrane segment at 421-441 threads the bilayer; sequence LIINLLLLCFGIFGGVVGTYV. Residues 442-451 are Extracellular-facing; the sequence is SILDIIAVYK.

Belongs to the amino acid/polyamine transporter 2 family. In terms of tissue distribution, expressed in the proximal and distal regions of the midgut; expressed in enterocytes and progenitor cells. Expression increases in response to intestinal bacterial infection and spreads further into the midgut, eventually covering the entire midgut.

It localises to the cell membrane. It is found in the late endosome membrane. Its subcellular location is the lysosome membrane. The protein localises to the basal cell membrane. Amino acid transporter which has pH-dependent electrogenic transport activity for alanine, glycine and proline. Plays a role in positive regulation of growth by directly or indirectly modulating the effects of the TOR signaling pathway. Required in enterocytes for the efficient recovery of gut epithelium following the cytoplasmic purge response to bacterial infection. Acts cell-autonomously to promote the retrograde transport of amino acids into the intestinal epithelium. Acts non-cell-autonomously through the insulin signaling pathway to stimulate Myc expression and the release of amino acids from nutrient stores into the hemolymph. This chain is Proton-coupled amino acid transporter-like protein acs, found in Drosophila melanogaster (Fruit fly).